Consider the following 965-residue polypeptide: Fibronectin-binding protein A (965 aa).

The signal sequence occupies residues 1 to 36 (MKNNLRYGIRKHKLGAASVFLGTMIVIGMGQDKEAA). A YSIRK-G/S signaling motif motif is present at residues 7–18 (YGIRKHKLGAAS). Residues 37-206 (ASEQKTTTVE…VTSKVTVEDE (170 aa)) form a disordered region. The tract at residues 37-514 (ASEQKTTTVE…SNKANGDGKY (478 aa)) is ligand-binding A region. Positions 39–55 (EQKTTTVEENGNSATDN) are enriched in polar residues. The segment covering 59-74 (ETQTTTTNVNTIDETQ) has biased composition (low complexity). The span at 75–92 (SYSATATEQPSNATQVTT) shows a compositional bias: polar residues. The segment covering 112-122 (TVKEEVVKEEA) has biased composition (basic and acidic residues). The segment covering 126-139 (VKETTQSQDNSGDQ) has biased composition (polar residues). Over residues 179-193 (DVAEAKEASDAKVET) the composition is skewed to basic and acidic residues. The fibrinogen/elastin/tropoelastin-binding stretch occupies residues 194–514 (GTDVTSKVTV…SNKANGDGKY (321 aa)). The fibronectin-binding stretch occupies residues 515-837 (GPIVDSNNFE…EGQQTIEEDT (323 aa)). Residues 548 to 577 (ENQDNTPLDIDYHTAIDGEGGYVDGYIETI) form a B-1 repeat. Positions 548 to 607 (ENQDNTPLDIDYHTAIDGEGGYVDGYIETIEETDSSAIDIDYHTAVDSEAGHVGGYTESS) are 2 X approximate tandem repeats. The B-2 repeat unit spans residues 578-607 (EETDSSAIDIDYHTAVDSEAGHVGGYTESS). 4 disordered regions span residues 598 to 625 (GHVGGYTESSEESNPIDFEESTHENSKH), 743 to 774 (LGYEGGQNSGNQSFEEDTEEDKPKYEQGGNII), 794 to 903 (IEED…GKVV), and 916 to 942 (VAPTKQKQAKKSELPETGGEESTNKGM). The stretch at 748 to 770 (GQNSGNQSFEEDTEEDKPKYEQG) is one D-1; truncated repeat. The segment at 748 to 839 (GQNSGNQSFE…QQTIEEDTTP (92 aa)) is 4 X approximate tandem repeats. One copy of the D-2; truncated repeat lies at 771–785 (GNIIDIDFDSVPQIH). Residues 786 to 824 (GFNKHNEIIEEDTNKDKPNYQFGGHNSVDFEEDTLPKVS) form a D-3 repeat. Residues 794–803 (IEEDTNKDKP) are compositionally biased toward basic and acidic residues. The stretch at 825-839 (GQNEGQQTIEEDTTP) is one D-4; truncated repeat. Over residues 839–885 (PPTPPTPEVPSEPGTPTPPTPEVPSEPGKPTPPTPEVPAEPGKPVPP) the composition is skewed to pro residues. 4 WR repeats span residues 840-853 (PTPPTPEVPSEPGT), 854-867 (PTPPTPEVPSEPGK), 868-881 (PTPPTPEVPAEPGK), and 882-895 (PVPPAKEEPKKPSK). Positions 840 to 895 (PTPPTPEVPSEPGTPTPPTPEVPSEPGKPTPPTPEVPAEPGKPVPPAKEEPKKPSK) are 4 X tandem repeats, Pro-rich (WR). The short motif at 929 to 933 (LPETG) is the LPXTG sorting signal element. Thr-932 carries the post-translational modification Pentaglycyl murein peptidoglycan amidated threonine. Residues 933–965 (GGEESTNKGMLFGGLFSILGLALLRRNKKNHKA) constitute a propeptide, removed by sortase.

Its subcellular location is the secreted. It is found in the cell wall. Its function is as follows. Promotes bacterial attachment to multiple substrates, such as fibronectin (Fn), fibrinogen (Fg), elastin peptides and tropoelastin. This confers to S.aureus the ability to invade endothelial cells. Promotes adherence to and aggregation of activated platelets. The polypeptide is Fibronectin-binding protein A (fnbA) (Staphylococcus aureus (strain MRSA252)).